Here is a 153-residue protein sequence, read N- to C-terminus: Large ribosomal subunit protein uL13 (153 aa).

This sequence belongs to the universal ribosomal protein uL13 family. In terms of assembly, part of the 50S ribosomal subunit.

Its function is as follows. This protein is one of the early assembly proteins of the 50S ribosomal subunit, although it is not seen to bind rRNA by itself. It is important during the early stages of 50S assembly. In Xanthobacter autotrophicus (strain ATCC BAA-1158 / Py2), this protein is Large ribosomal subunit protein uL13.